We begin with the raw amino-acid sequence, 350 residues long: UBX domain-containing protein 2B (350 aa).

The span at 1–29 (MEERENSEEGDDGAGEEEEEDQGSGEDGG) shows a compositional bias: acidic residues. The segment at 1–46 (MEERENSEEGDDGAGEEEEEDQGSGEDGGEVGAEREQEAELKDSLR) is disordered. Residues 32-45 (GAEREQEAELKDSL) are compositionally biased toward basic and acidic residues. In terms of domain architecture, SEP spans 160-225 (EIQILLKLWS…MEDHQDQEYI (66 aa)). A UBX domain is found at 271–348 (EHVPTTKIQI…DILNTVILQR (78 aa)).

It belongs to the NSFL1C family.

It is found in the nucleus. The protein localises to the cytoplasm. Its subcellular location is the cytosol. The protein resides in the endoplasmic reticulum. It localises to the golgi apparatus. It is found in the cytoskeleton. The protein localises to the microtubule organizing center. Its subcellular location is the centrosome. Functionally, adapter protein required for Golgi and endoplasmic reticulum biogenesis. Involved in Golgi and endoplasmic reticulum maintenance during interphase and in their reassembly at the end of mitosis. Regulates the centrosomal levels of kinase aurka-a/Aurora A during mitotic progression by promoting aurka-a removal from centrosomes in prophase. Also, regulates spindle orientation during mitosis. The chain is UBX domain-containing protein 2B (ubxn2b) from Xenopus laevis (African clawed frog).